Consider the following 223-residue polypeptide: Ribonuclease 3 (223 aa).

Positions 1–131 constitute an RNase III domain; sequence MDGVDELLLR…LIGAVMVDQG (131 aa). Residue E44 participates in Mg(2+) binding. Residue D48 is part of the active site. Residues D117 and E120 each contribute to the Mg(2+) site. E120 is a catalytic residue. Positions 157–220 constitute a DRBM domain; sequence DPKTKLQKLT…AMSALASLEN (64 aa).

This sequence belongs to the ribonuclease III family. In terms of assembly, homodimer. Mg(2+) is required as a cofactor.

Its subcellular location is the cytoplasm. It catalyses the reaction Endonucleolytic cleavage to 5'-phosphomonoester.. Its function is as follows. Digests double-stranded RNA. Involved in the processing of primary rRNA transcript to yield the immediate precursors to the large and small rRNAs (23S and 16S). Processes some mRNAs, and tRNAs when they are encoded in the rRNA operon. Processes pre-crRNA and tracrRNA of type II CRISPR loci if present in the organism. This Tropheryma whipplei (strain Twist) (Whipple's bacillus) protein is Ribonuclease 3.